The sequence spans 130 residues: Ribonuclease pancreatic (130 aa).

The N-terminal stretch at 1–6 is a signal peptide; sequence VQPSLG. Residues Lys-13 and Arg-16 each contribute to the substrate site. His-18 functions as the Proton acceptor in the catalytic mechanism. 4 disulfides stabilise this stretch: Cys-32/Cys-90, Cys-46/Cys-101, Cys-64/Cys-116, and Cys-71/Cys-78. Residue Asn-40 is glycosylated (N-linked (GlcNAc...) asparagine). Residues 47–51, Lys-72, and Arg-91 contribute to the substrate site; that span reads KPVNT. His-125 (proton donor) is an active-site residue.

Belongs to the pancreatic ribonuclease family. In terms of assembly, monomer. Interacts with and forms tight 1:1 complexes with RNH1. Dimerization of two such complexes may occur. Interaction with RNH1 inhibits this protein. In terms of tissue distribution, pancreas.

It is found in the secreted. It carries out the reaction an [RNA] containing cytidine + H2O = an [RNA]-3'-cytidine-3'-phosphate + a 5'-hydroxy-ribonucleotide-3'-[RNA].. It catalyses the reaction an [RNA] containing uridine + H2O = an [RNA]-3'-uridine-3'-phosphate + a 5'-hydroxy-ribonucleotide-3'-[RNA].. Endonuclease that catalyzes the cleavage of RNA on the 3' side of pyrimidine nucleotides. Acts on single-stranded and double-stranded RNA. In Cricetulus griseus (Chinese hamster), this protein is Ribonuclease pancreatic (RNASE1).